The sequence spans 447 residues: Folate synthesis bifunctional protein (447 aa).

The tract at residues 1–165 (MTTAQFICLS…SFGEIAHLLP (165 aa)) is HPPK. One can recognise a Pterin-binding domain in the interval 179 to 438 (TLLMGVVNVT…DVEANQRVLS (260 aa)). The segment at 181–447 (LMGVVNVTDN…SAAAWSGVHV (267 aa)) is DHPS. Asn-186 is a Mg(2+) binding site. (7,8-dihydropterin-6-yl)methyl diphosphate-binding positions include Thr-226, Asp-266, Asn-286, Asp-356, Lys-392, and 426–428 (RVH).

The protein in the C-terminal section; belongs to the DHPS family. In the N-terminal section; belongs to the HPPK family. The cofactor is Mg(2+).

The enzyme catalyses 6-hydroxymethyl-7,8-dihydropterin + ATP = (7,8-dihydropterin-6-yl)methyl diphosphate + AMP + H(+). It catalyses the reaction (7,8-dihydropterin-6-yl)methyl diphosphate + 4-aminobenzoate = 7,8-dihydropteroate + diphosphate. It functions in the pathway cofactor biosynthesis; tetrahydrofolate biosynthesis; 2-amino-4-hydroxy-6-hydroxymethyl-7,8-dihydropteridine diphosphate from 7,8-dihydroneopterin triphosphate: step 4/4. It participates in cofactor biosynthesis; tetrahydrofolate biosynthesis; 7,8-dihydrofolate from 2-amino-4-hydroxy-6-hydroxymethyl-7,8-dihydropteridine diphosphate and 4-aminobenzoate: step 1/2. The chain is Folate synthesis bifunctional protein (folKP) from Chlamydia caviae (strain ATCC VR-813 / DSM 19441 / 03DC25 / GPIC) (Chlamydophila caviae).